The chain runs to 277 residues: UBX domain-containing protein 8 (277 aa).

Residue M1 is a topological domain, cytoplasmic. A helical membrane pass occupies residues A2–L22. At R23 to D33 the chain is on the lumenal side. Residues L34–V54 traverse the membrane as a helical segment. Residues T55–Q277 lie on the Cytoplasmic side of the membrane. The tract at residues P64 to E89 is disordered. Residues H68–E89 show a composition bias toward basic and acidic residues. Residues T193–V269 form the UBX domain.

Interacts with SYVN1 and VCP. As to expression, highly expressed in gonads. In testis, expressed in post-meiotic round spermatids, while in ovaries it is expressed in granulosa cells.

The protein resides in the endoplasmic reticulum membrane. In terms of biological role, involved in endoplasmic reticulum-associated degradation (ERAD) for misfolded lumenal proteins, possibly by tethering VCP to the endoplasmic reticulum membrane. May play a role in reproduction. The chain is UBX domain-containing protein 8 (Ubxn8) from Mus musculus (Mouse).